The primary structure comprises 143 residues: Large ribosomal subunit protein uL11 (143 aa).

The protein belongs to the universal ribosomal protein uL11 family. Part of the ribosomal stalk of the 50S ribosomal subunit. Interacts with L10 and the large rRNA to form the base of the stalk. L10 forms an elongated spine to which L12 dimers bind in a sequential fashion forming a multimeric L10(L12)X complex. Post-translationally, one or more lysine residues are methylated.

Functionally, forms part of the ribosomal stalk which helps the ribosome interact with GTP-bound translation factors. The polypeptide is Large ribosomal subunit protein uL11 (Bordetella parapertussis (strain 12822 / ATCC BAA-587 / NCTC 13253)).